We begin with the raw amino-acid sequence, 732 residues long: Zinc/cadmium/lead-transporting P-type ATPase (732 aa).

The Cytoplasmic portion of the chain corresponds to 1 to 124 (MSTPDNHGKK…QAADEPQASR (124 aa)). The HMA domain maps to 48–112 (TRYSWKVSGM…AVQKAGYSLR (65 aa)). Residues Asp58, Cys59, and Cys62 each coordinate Zn(2+). Residues 125 to 145 (LKENLPLITLIVMMAISWGLE) traverse the membrane as a helical segment. Gln146 is a topological domain (periplasmic). A helical membrane pass occupies residues 147–167 (FNHPFGQLAFIATTLVGLYPI). Topologically, residues 168 to 179 (ARQALRLIKSGS) are cytoplasmic. The chain crosses the membrane as a helical span at residues 180–197 (YFAIETLMSVAAIGALFI). Residues 198 to 202 (GATAE) lie on the Periplasmic side of the membrane. The chain crosses the membrane as a helical span at residues 203–222 (AAMVLLLFLIGERLEGWAAS). At 223 to 356 (RARQGVSALM…IDRFSRIYTP (134 aa)) the chain is on the cytoplasmic side. The chain crosses the membrane as a helical span at residues 357–377 (AIMAVALLVTLVPPLLFAASW). At 378 to 383 (QEWIYK) the chain is on the periplasmic side. A helical membrane pass occupies residues 384 to 404 (GLTLLLIGCPCALVISTPAAI). Zn(2+) is bound by residues Cys392 and Cys394. Residues 405-685 (TSGLAAAARR…RATHANIRQN (281 aa)) are Cytoplasmic-facing. The active-site 4-aspartylphosphate intermediate is Asp436. Mg(2+)-binding residues include Asp436, Thr438, and Asp628. Residues 686–702 (ITIALGLKGIFLVTTLL) form a helical membrane-spanning segment. Residues 703 to 707 (GMTGL) are Periplasmic-facing. A helical membrane pass occupies residues 708-729 (WLAVLADTGATVLVTANALRLL). Zn(2+) is bound at residue Asp714. The Cytoplasmic segment spans residues 730 to 732 (RRR).

The protein belongs to the cation transport ATPase (P-type) (TC 3.A.3) family. Type IB subfamily.

It localises to the cell inner membrane. The catalysed reaction is Pb(2+)(in) + ATP + H2O = Pb(2+)(out) + ADP + phosphate + H(+). The enzyme catalyses Zn(2+)(in) + ATP + H2O = Zn(2+)(out) + ADP + phosphate + H(+). It catalyses the reaction Cd(2+)(in) + ATP + H2O = Cd(2+)(out) + ADP + phosphate + H(+). Confers resistance to zinc, cadmium and lead. Couples the hydrolysis of ATP with the export of zinc, cadmium or lead. The sequence is that of Zinc/cadmium/lead-transporting P-type ATPase from Shigella sonnei (strain Ss046).